A 625-amino-acid polypeptide reads, in one-letter code: 1-deoxy-D-xylulose-5-phosphate synthase (625 aa).

Thiamine diphosphate-binding positions include histidine 80 and 121–123 (GHS). Mg(2+) is bound at residue aspartate 152. Residues 153–154 (GA), asparagine 181, tyrosine 288, and glutamate 370 contribute to the thiamine diphosphate site. Mg(2+) is bound at residue asparagine 181.

Belongs to the transketolase family. DXPS subfamily. As to quaternary structure, homodimer. The cofactor is Mg(2+). Thiamine diphosphate serves as cofactor.

The enzyme catalyses D-glyceraldehyde 3-phosphate + pyruvate + H(+) = 1-deoxy-D-xylulose 5-phosphate + CO2. It participates in metabolic intermediate biosynthesis; 1-deoxy-D-xylulose 5-phosphate biosynthesis; 1-deoxy-D-xylulose 5-phosphate from D-glyceraldehyde 3-phosphate and pyruvate: step 1/1. Its function is as follows. Catalyzes the acyloin condensation reaction between C atoms 2 and 3 of pyruvate and glyceraldehyde 3-phosphate to yield 1-deoxy-D-xylulose-5-phosphate (DXP). This Alteromonas mediterranea (strain DSM 17117 / CIP 110805 / LMG 28347 / Deep ecotype) protein is 1-deoxy-D-xylulose-5-phosphate synthase.